The chain runs to 940 residues: Testis-expressed protein 11 (940 aa).

It belongs to the SPO22 family. As to quaternary structure, interacts with SYCP2. Interacts with PBXIP1; may prevent interaction between PBXIP1 and ESR2. Interacts with SHOC1. Interacts with REDIC1. As to expression, testis-specific. Not expressed in adult ovaries.

Its subcellular location is the chromosome. In terms of biological role, regulator of crossing-over during meiosis. Involved in initiation and/or maintenance of chromosome synapsis and formation of crossovers. The protein is Testis-expressed protein 11 (TEX11) of Homo sapiens (Human).